The sequence spans 158 residues: uncharacterized protein (158 aa).

This is an uncharacterized protein from Aedes vexans (Inland floodwater mosquito).